A 796-amino-acid chain; its full sequence is ATP-dependent DNA helicase PIF6 (796 aa).

Positions 197–230 (RPTGLPSAHSGGKLPKHMGGDELNPQLEGSTTPG) are disordered. 255–262 (GSAGTGKT) provides a ligand contact to ATP. The DNA-binding element occupies 636-655 (QAYVALSRVRSREDLMLTAF). Disordered stretches follow at residues 692–719 (KGKT…PEEH) and 762–796 (TSSA…VDDD).

Belongs to the helicase family. PIF1 subfamily. As to quaternary structure, monomer. Mg(2+) serves as cofactor.

The protein localises to the nucleus. The enzyme catalyses Couples ATP hydrolysis with the unwinding of duplex DNA at the replication fork by translocating in the 5'-3' direction. This creates two antiparallel DNA single strands (ssDNA). The leading ssDNA polymer is the template for DNA polymerase III holoenzyme which synthesizes a continuous strand.. It carries out the reaction ATP + H2O = ADP + phosphate + H(+). DNA-dependent ATPase and 5'-3' DNA helicase required for the maintenance of genome stability. The polypeptide is ATP-dependent DNA helicase PIF6 (Trypanosoma brucei brucei (strain 927/4 GUTat10.1)).